A 204-amino-acid chain; its full sequence is uncharacterized protein (204 aa).

The helical transmembrane segment at 63 to 83 (SLLLSMVASVTAAGGNAAIVG) threads the bilayer.

The protein resides in the membrane. This is an uncharacterized protein from Mycobacterium tuberculosis (strain ATCC 25618 / H37Rv).